A 177-amino-acid polypeptide reads, in one-letter code: Large ribosomal subunit protein uL6 (177 aa).

This sequence belongs to the universal ribosomal protein uL6 family. As to quaternary structure, part of the 50S ribosomal subunit.

This protein binds to the 23S rRNA, and is important in its secondary structure. It is located near the subunit interface in the base of the L7/L12 stalk, and near the tRNA binding site of the peptidyltransferase center. This Chelativorans sp. (strain BNC1) protein is Large ribosomal subunit protein uL6.